The primary structure comprises 901 residues: Nuclear factor of activated T-cells, cytoplasmic 4 (901 aa).

Disordered regions lie at residues 15-179 and 203-362; these read LVFG…LSSW and NEAA…EDSV. Residues 61–81 are compositionally biased toward pro residues; that stretch reads IPRPPPPRPGMHSPPPRPAPS. Over residues 96–109 the composition is skewed to gly residues; it reads GGPGGNAGGAGGGR. The segment at 114 to 119 is calcineurin-binding; it reads PSIRIT. A compositionally biased stretch (low complexity) spans 114–123; the sequence is PSIRITSISP. Positions 151–165 are enriched in gly residues; that stretch reads GFGGYREAGGQGGGA. The segment covering 166–179 has biased composition (low complexity); sequence FFSPSPGSSSLSSW. Residues S168 and S170 each carry the phosphoserine; by MAPK7 and MAPK14 modification. S213 and S217 each carry phosphoserine; by MAPK8 and MAPK9. Residues 213 to 229 form an SP 1 repeat; that stretch reads SPLPSPRASPRPWTPED. The segment at 213-293 is 2 approximate SP repeats; that stretch reads SPLPSPRASP…LSRRGSLGEE (81 aa). Composition is skewed to pro residues over residues 215–227 and 254–263; these read LPSP…PWTP and GPVPASPRPA. Residues 268-270 carry the Nuclear localization signal motif; sequence KRR. Residues 272-288 are compositionally biased toward low complexity; it reads SSSGTPSSASPALSRRG. The SP 2; approximate repeat unit spans residues 277 to 293; sequence PSSASPALSRRGSLGEE. S289 bears the Phosphoserine mark. The residue at position 334 (S334) is a Phosphoserine; by RPS6KA3. Residue S344 is modified to Phosphoserine. An RHD domain is found at 401–582; that stretch reads SALPPLDWPL…VPIECSQRSA (182 aa). A DNA-binding region spans residues 430–437; sequence RAHYETEG. One can recognise an IPT/TIG domain in the interval 586–683; the sequence is PQVETYSPSA…KRSPTQSFKF (98 aa). Residues 672-674 carry the Nuclear localization signal motif; sequence RRK. Residue K689 forms a Glycyl lysine isopeptide (Lys-Gly) (interchain with G-Cter in SUMO2) linkage. Disordered stretches follow at residues 695 to 721 and 827 to 869; these read DSSL…PRPP and PQSA…FRDS.

As to quaternary structure, member of the multicomponent NFATC transcription complex that consists of at least two components, a pre-existing cytoplasmic component NFATC2 and an inducible nuclear component NFATC1. Other NFAT proteins, such as NFATC3, or members of the activating protein-1 (AP-1) family and MAF can also bind the complex. NFAT proteins can bind DNA as monomers or dimers. Component of a promoter-binding complex composed of STAT3, NFATC3 and NFATC4; complex formation is enhanced by calcineurin. Interacts with CREBBP; this interaction potentiates transcription activation. Interacts with MAPK8/JNK1 and MAPK9/JNK2. Interacts with GATA4 (via the second Zn finger). Interacts (via N-terminus) with IRAK1 (via C-terminus). Interacts with RPS6KA3. Interacts with HOMER1, HOMER2 and HOMER3; this interaction competes with calcineurin/PPP3CA-binding and hence prevents NFATC4 dephosphorylation and activation. Interacts with ESR1 and ESR2; this interaction decreases NFATC4 transcriptional activity. Interacts with MTOR and MAPK7/ERK5. Interacts with TRIM17; this interaction prevents NFATC3 nuclear localization. Interacts with TCF25 (via C-terminus); the interaction leads to suppression of NFATC4 transcription factor activity and is reduced following stimulation with angiotensin-2. Phosphorylated by NFATC-kinases; dephosphorylated by calcineurin/PPP3CA. Phosphorylated on Ser-168 and Ser-170 by MTOR, IRAK1, MAPK7/ERK5 and MAPK14/p38, on Ser-213 and Ser-217 by MAPK8 and MAPK9, and on Ser-289 and Ser-344 by RPS6KA3. Phosphorylated by GSK3B. Phosphorylation by GSK3B markedly increases NFATC4 ubiquitination. Phosphorylation by MAPK8/JNK1, MAPK9/JNK2 and RPS6KA3 may stimulate NFATC4 transcriptional activity. Phosphorylation at Ser-168 and Ser-170 is stimulated by UV irradiation. In terms of processing, ubiquitinated, leading to degradation by the proteasome. Ubiquitination may be stimulated by GSK3B-dependent phosphorylation. Polyubiquitin linkage mainly occurs through 'Lys-48'. As to expression, widely expressed. In the brain, expressed in neurons. Expressed in the hippocampus (at protein level). In the hippocampus, expressed in both the CA1-CA3 pyramidal cells and the dentate gyrus granular cells. Expressed in a subset of hippocampal cells representing adult-born neurons (at protein level). Expressed in the submandibular gland (at protein level). In the olfactory system, expressed at low levels in the glomerular and granular layers and in the mitral cell layer. In the cerebellum, expressed at moderate levels in granular neurons. Expressed at moderate levels in the choroid plexus and ependymal cells. Expressed in neurons of the cochlear nucleus (at protein level). Expressed at low levels in the heart (at protein level). Expressed in ventricular cardiomyocytes (at protein level). Expressed in the lung.

It is found in the cytoplasm. The protein resides in the nucleus. In terms of biological role, ca(2+)-regulated transcription factor that is involved in several processes, including the development and function of the immune, cardiovascular, musculoskeletal, and nervous systems. Involved in T-cell activation, stimulating the transcription of cytokine genes, including that of IL2 and IL4. Following JAK/STAT signaling activation and as part of a complex with NFATC3 and STAT3, binds to the alpha-beta E4 promoter region of CRYAB and activates transcription in cardiomyocytes. Along with NFATC3, involved in embryonic heart development. Involved in mitochondrial energy metabolism required for cardiac morphogenesis and function. Transactivates many genes involved in heart physiology. Along with GATA4, binds to and activates NPPB/BNP promoter. Activates NPPA/ANP/ANF and MYH7/beta-MHC transcription. Binds to and transactivates AGTR2 gene promoter. Involved in the regulation of adult hippocampal neurogenesis. Involved in BDNF-driven pro-survival signaling in hippocampal adult-born neurons. Involved in the formation of long-term spatial memory and long-term potentiation. In cochlear nucleus neurons, may play a role in deafferentation-induced apoptosis during a developmental critical period when auditory neurons depend on afferent input for survival. Binds to and activates the BACE1/Beta-secretase 1 promoter, hence may regulate the proteolytic processing of the amyloid precursor protein (APP). Plays a role in adipocyte differentiation. May be involved in myoblast differentiation into myotubes. Binds the consensus DNA sequence 5'-GGAAAAT-3'. In the presence of CREBBP, activates TNF transcription. Binds to PPARG gene promoter and regulates its activity. Binds to PPARG and REG3G gene promoters. The chain is Nuclear factor of activated T-cells, cytoplasmic 4 from Mus musculus (Mouse).